The following is a 401-amino-acid chain: Phosphoglycerate kinase (401 aa).

Substrate-binding positions include 21–23 (DFN), Arg-36, 59–62 (HLGR), Arg-119, and Arg-160. ATP-binding positions include Lys-212, Glu-330, and 357 to 360 (GGDS).

The protein belongs to the phosphoglycerate kinase family. Monomer.

It is found in the cytoplasm. It catalyses the reaction (2R)-3-phosphoglycerate + ATP = (2R)-3-phospho-glyceroyl phosphate + ADP. It participates in carbohydrate degradation; glycolysis; pyruvate from D-glyceraldehyde 3-phosphate: step 2/5. This is Phosphoglycerate kinase from Limosilactobacillus fermentum (strain NBRC 3956 / LMG 18251) (Lactobacillus fermentum).